The primary structure comprises 943 residues: Isoleucine--tRNA ligase (943 aa).

The 'HIGH' region motif lies at 58–68; the sequence is PYANGKIHIGH. An L-isoleucyl-5'-AMP-binding site is contributed by E567. The 'KMSKS' region motif lies at 608–612; the sequence is KMSKS. An ATP-binding site is contributed by K611. Residues C906, C909, C926, and C929 each contribute to the Zn(2+) site.

Belongs to the class-I aminoacyl-tRNA synthetase family. IleS type 1 subfamily. As to quaternary structure, monomer. Zn(2+) serves as cofactor.

The protein localises to the cytoplasm. The enzyme catalyses tRNA(Ile) + L-isoleucine + ATP = L-isoleucyl-tRNA(Ile) + AMP + diphosphate. Catalyzes the attachment of isoleucine to tRNA(Ile). As IleRS can inadvertently accommodate and process structurally similar amino acids such as valine, to avoid such errors it has two additional distinct tRNA(Ile)-dependent editing activities. One activity is designated as 'pretransfer' editing and involves the hydrolysis of activated Val-AMP. The other activity is designated 'posttransfer' editing and involves deacylation of mischarged Val-tRNA(Ile). This is Isoleucine--tRNA ligase from Pseudomonas putida (strain GB-1).